We begin with the raw amino-acid sequence, 340 residues long: Toxin coregulated pilus biosynthesis protein E (340 aa).

3 consecutive transmembrane segments (helical) span residues 108–131 (AISS…GYSV), 146–161 (WPGV…FSLY), and 312–333 (NISL…FSLV).

It belongs to the GSP F family.

The protein resides in the cell inner membrane. Probably involved in cholera toxin receptor (GM1) interaction in order to bring the cells within close proximity of the ganglioside for efficient toxin delivery. This Vibrio cholerae serotype O1 (strain ATCC 39315 / El Tor Inaba N16961) protein is Toxin coregulated pilus biosynthesis protein E (tcpE).